The chain runs to 102 residues: Nucleoid-associated protein BCc_301 (102 aa).

The protein belongs to the YbaB/EbfC family. In terms of assembly, homodimer.

It is found in the cytoplasm. It localises to the nucleoid. Functionally, binds to DNA and alters its conformation. May be involved in regulation of gene expression, nucleoid organization and DNA protection. The chain is Nucleoid-associated protein BCc_301 from Buchnera aphidicola subsp. Cinara cedri (strain Cc).